The sequence spans 377 residues: Putative FBD-associated F-box protein At5g44940 (377 aa).

One can recognise an F-box domain in the interval 4-50 (FDYISEFPDCLLTQILLNLPTKDSVKTSVLSKRWRNLWLNVPGLRLR). The 50-residue stretch at 297 to 346 (IDFHKVPQCLISTLEYVQIEELILKEKSGIKLVDYFLENSAVLKKLTLSF) folds into the FBD domain.

The chain is Putative FBD-associated F-box protein At5g44940 from Arabidopsis thaliana (Mouse-ear cress).